The sequence spans 331 residues: Biotin synthase (331 aa).

In terms of domain architecture, Radical SAM core spans 46 to 275 (YYGKKVKLNM…TKEIRISGGR (230 aa)). [4Fe-4S] cluster contacts are provided by cysteine 64, cysteine 68, and cysteine 71. [2Fe-2S] cluster is bound by residues cysteine 108, cysteine 140, cysteine 200, and arginine 270.

Belongs to the radical SAM superfamily. Biotin synthase family. As to quaternary structure, homodimer. [4Fe-4S] cluster serves as cofactor. [2Fe-2S] cluster is required as a cofactor.

It carries out the reaction (4R,5S)-dethiobiotin + (sulfur carrier)-SH + 2 reduced [2Fe-2S]-[ferredoxin] + 2 S-adenosyl-L-methionine = (sulfur carrier)-H + biotin + 2 5'-deoxyadenosine + 2 L-methionine + 2 oxidized [2Fe-2S]-[ferredoxin]. It functions in the pathway cofactor biosynthesis; biotin biosynthesis; biotin from 7,8-diaminononanoate: step 2/2. Its function is as follows. Catalyzes the conversion of dethiobiotin (DTB) to biotin by the insertion of a sulfur atom into dethiobiotin via a radical-based mechanism. The protein is Biotin synthase of Lysinibacillus sphaericus (strain C3-41).